The sequence spans 120 residues: Synaptobrevin (120 aa).

Residues 1–38 (MSAPPSGPAPDAQGGAPGQPTGPPGAPPNTTSNRRLQQ) form a disordered region. Over 1 to 98 (MSAPPSGPAP…KRKYWWKNCK (98 aa)) the chain is Cytoplasmic. Over residues 29-38 (NTTSNRRLQQ) the composition is skewed to polar residues. Positions 35–95 (RLQQTQAQVE…AKLKRKYWWK (61 aa)) constitute a v-SNARE coiled-coil homology domain. The helical; Anchor for type IV membrane protein transmembrane segment at 99–118 (MMIMLGGIGAIIVIVIIIYF) threads the bilayer. Topologically, residues 119–120 (FT) are vesicular.

It belongs to the synaptobrevin family. Nervous system specific.

It localises to the cytoplasmic vesicle. The protein localises to the secretory vesicle. It is found in the synaptic vesicle membrane. Its subcellular location is the synapse. The protein resides in the synaptosome. Its function is as follows. This protein may play a role in packaging, transport or release of neurotransmitters. The polypeptide is Synaptobrevin (Tetronarce californica (Pacific electric ray)).